Consider the following 188-residue polypeptide: Elongation factor P-like protein (188 aa).

This sequence belongs to the elongation factor P family.

This chain is Elongation factor P-like protein, found in Stenotrophomonas maltophilia (strain R551-3).